The following is a 1372-amino-acid chain: MSVVNFYGQLSNTQQFDQIRINIASPDQVRSWSFGEVTKPETINYRTFKPEKDGLFCARIFGPVKDYECLCGKYKRMKNRGITCEKCGVEVTVSRVRRERMGHIELAAPVAHIWFLKSLPSRISTLLDMTMRDVEKILYFENYVVVDPGLSILQKGELLTEEELQKAKDKYGEDAFTASIGAEVIQQMLKELDFSKLKQELYDELHITSSEVKKKKLVKRLKLVEDFLESENKPEWMIMDVLPVIPPEIRPLVMLDGGRFATSDLNELYRRVINRNNRLKKLIESKAPDIIVRNEKRMLQEAVDALFDNGRRGRAAKNANKRPFKSLSDMLKGKQGRFRQNLLGKRVDYSGRSVIVVGPELKLHQCGLPKKMALELFKPFIYSKLELYGIATTIKAAKRMVEAEKPEVWDVLEEVIREHPVLLNRAPTLHRLGIQAFEPLLIEGKAIQLHPLVCAAFNADFDGDQMAVHIPLSIEAQLEARVFMMSTNNILSPANGRPIIVPDKDIVLGLYYLTIAFDNEVGEGMMFSDLAEMEHALYNKFITIHTKIKYRRDQLNAEGKMVPVIIDTTYGRLMVGELLPSNPNIEFKCINKQLTKKDISLVIDLVYRHCGQKATVIFADQLMKLGFKYACSSGISFGMDDMVVPESKSTHINETQLEIKEFEQQYSNGLITYGEKYNKVVDAWSRCTDRVANDMMKEIATPPINDYPNHQRINAIYMMAISGARGSFQQIKQLGGMRGLMTKSNGQIIQTPIISNFKEGLTEFECFNSANGMRKGQIDTALKTASSGYLTRKLVDVAQDCIITEKDCGTDKGIEVKSVIEGGEIIVPLAEKILGRTAAIDIFHPVTNDLILNKGELINESKLEQIESAGLDRIMIKSVLTCESSTGICSICYGRDLATGTLVSEGEAIGVIAAQSIGEPGTQLTMRTFHIGGAATKGAEVSSVEASYDAKVKIISRNVVINSEERKIVMSRNCELLLLDDNGNEKARHKIPYGARLLVDDGDIVIKTQKLAEWDPYTIPIITEKSGKVLFKDMVEGISIRDVTDEATGIPSKVIIESKQYSRGAELRPRIQLLDSKGEVITLSNGLEARYYLPVGAVLSVEDGIQISVGDIIARIPKESTTTKDITGGLPRVAELVEARRPKDHAVIAEVDGRVEFGKDYKSKRRIIIHPIDGTLSIEYMVPKGKHVVVNEGDFVKKGDLLIDGNPVLQDILKVMGVEVLANYIVKEVQAVYRLQGVKIDDKHIEVIIRQMLQKVEVTDSGGTTLLVGEKIDRHEFDEINEKAMKNGLKPAEAQLILQGITKASLQTRSFISAASFQETTRVLTEAAIAGKVDKLRGLKENVIVGRLVPAGTGYFMDKMRKAAVKLDEENV.

Residues Cys-69, Cys-71, Cys-84, and Cys-87 each contribute to the Zn(2+) site. Residues Asp-460, Asp-462, and Asp-464 each coordinate Mg(2+). Residues Cys-808, Cys-882, Cys-889, and Cys-892 each contribute to the Zn(2+) site.

This sequence belongs to the RNA polymerase beta' chain family. As to quaternary structure, the RNAP catalytic core consists of 2 alpha, 1 beta, 1 beta' and 1 omega subunit. When a sigma factor is associated with the core the holoenzyme is formed, which can initiate transcription. It depends on Mg(2+) as a cofactor. Zn(2+) is required as a cofactor.

The enzyme catalyses RNA(n) + a ribonucleoside 5'-triphosphate = RNA(n+1) + diphosphate. Its function is as follows. DNA-dependent RNA polymerase catalyzes the transcription of DNA into RNA using the four ribonucleoside triphosphates as substrates. The chain is DNA-directed RNA polymerase subunit beta' from Rickettsia typhi (strain ATCC VR-144 / Wilmington).